The sequence spans 464 residues: Multifunctional dye peroxidase DyP2 (464 aa).

The active-site Proton acceptor is the Asp-203. Glu-258, Glu-273, and Glu-284 together coordinate Mn(2+). His-321 is a binding site for heme.

This sequence belongs to the DyP-type peroxidase family. Exists both as a monomeric and oligomeric species in solution; the monomeric form contains no bound heme cofactor and is inactive. The cofactor is heme b. It depends on Mn(2+) as a cofactor.

The protein resides in the secreted. It carries out the reaction 1-(4-hydroxy-3-methoxyphenyl)-2-(2-methoxyphenoxy)propane-1,3-diol + H2O2 = guaiacol + vanillin + glycolaldehyde + H2O. It catalyses the reaction 2 Mn(2+) + H2O2 + 2 H(+) = 2 Mn(3+) + 2 H2O. The catalysed reaction is 2 a phenolic donor + H2O2 = 2 a phenolic radical donor + 2 H2O. The enzyme catalyses Reactive Blue 5 + 2 H2O2 = 2,2'-disulfonyl azobenzene + 3-[(4-amino-6-chloro-1,3,5-triazin-2-yl)amino]benzenesulfonate + phthalate + 2 H2O + 2 H(+). Functionally, displays both high peroxidase and manganese peroxidase activity. Is likely involved in lignin degradation. Also has a Mn-dependent oxidase mode of action that expands its substrate scope in vitro; is thus able to catalyze the O(2)- and Mn-dependent oxidative decarboxylation of 4-methoxymandelate to anisaldehyde. This chain is Multifunctional dye peroxidase DyP2, found in Amycolatopsis sp. (strain ATCC 39116 / 75iv2).